Reading from the N-terminus, the 239-residue chain is ATP-dependent dethiobiotin synthetase BioD (239 aa).

An ATP-binding site is contributed by 15-20; the sequence is EIGKTF. Position 19 (T19) interacts with Mg(2+). K40 is an active-site residue. Residues D57, 118-121, 178-179, and 211-213 each bind ATP; these read EGVG, NH, and AHL. 2 residues coordinate Mg(2+): D57 and E118.

The protein belongs to the dethiobiotin synthetase family. Homodimer. Mg(2+) serves as cofactor.

Its subcellular location is the cytoplasm. The catalysed reaction is (7R,8S)-7,8-diammoniononanoate + CO2 + ATP = (4R,5S)-dethiobiotin + ADP + phosphate + 3 H(+). It functions in the pathway cofactor biosynthesis; biotin biosynthesis; biotin from 7,8-diaminononanoate: step 1/2. Catalyzes a mechanistically unusual reaction, the ATP-dependent insertion of CO2 between the N7 and N8 nitrogen atoms of 7,8-diaminopelargonic acid (DAPA, also called 7,8-diammoniononanoate) to form a ureido ring. The protein is ATP-dependent dethiobiotin synthetase BioD of Burkholderia vietnamiensis (strain G4 / LMG 22486) (Burkholderia cepacia (strain R1808)).